The following is a 304-amino-acid chain: Sulfate adenylyltransferase subunit 2 (304 aa).

Belongs to the PAPS reductase family. CysD subfamily. Heterodimer composed of CysD, the smaller subunit, and CysN.

The enzyme catalyses sulfate + ATP + H(+) = adenosine 5'-phosphosulfate + diphosphate. It functions in the pathway sulfur metabolism; hydrogen sulfide biosynthesis; sulfite from sulfate: step 1/3. Its function is as follows. With CysN forms the ATP sulfurylase (ATPS) that catalyzes the adenylation of sulfate producing adenosine 5'-phosphosulfate (APS) and diphosphate, the first enzymatic step in sulfur assimilation pathway. APS synthesis involves the formation of a high-energy phosphoric-sulfuric acid anhydride bond driven by GTP hydrolysis by CysN coupled to ATP hydrolysis by CysD. In Acinetobacter baumannii (strain SDF), this protein is Sulfate adenylyltransferase subunit 2.